The chain runs to 183 residues: Large ribosomal subunit protein uL5 (183 aa).

Belongs to the universal ribosomal protein uL5 family. In terms of assembly, part of the 50S ribosomal subunit; part of the 5S rRNA/L5/L18/L25 subcomplex. Contacts the 5S rRNA and the P site tRNA. Forms a bridge to the 30S subunit in the 70S ribosome.

In terms of biological role, this is one of the proteins that bind and probably mediate the attachment of the 5S RNA into the large ribosomal subunit, where it forms part of the central protuberance. In the 70S ribosome it contacts protein S13 of the 30S subunit (bridge B1b), connecting the 2 subunits; this bridge is implicated in subunit movement. Contacts the P site tRNA; the 5S rRNA and some of its associated proteins might help stabilize positioning of ribosome-bound tRNAs. The polypeptide is Large ribosomal subunit protein uL5 (Leptospira biflexa serovar Patoc (strain Patoc 1 / Ames)).